A 1265-amino-acid polypeptide reads, in one-letter code: Cohesin subunit SA-1 (1265 aa).

A compositionally biased stretch (polar residues) spans 1 to 16; sequence MITSELSVLQDSTNES. 2 disordered regions span residues 1–21 and 37–91; these read MITS…VMHT and DLEV…EGDP. The segment covering 62–73 has biased composition (basic and acidic residues); that stretch reads TPGDRSRAEPGS. In terms of domain architecture, SCD spans 303 to 388; that stretch reads FVHRYRDAIA…NRFKDRIVSM (86 aa). 2 disordered regions span residues 1063 to 1097 and 1111 to 1130; these read GDED…KRVI and DTIQ…TVLR. The segment covering 1069–1082 has biased composition (low complexity); sequence SVNSGGSNSKGSSV. Positions 1083–1095 are enriched in basic residues; sequence RSKKGRPPLHKKR. Positions 1111-1129 are enriched in polar residues; sequence DTIQTPGALTTPQLTSTVL.

This sequence belongs to the SCC3 family. Interacts directly with RAD21 in cohesin complex. Cohesin complexes are composed of a heterodimer between and SMC3, which are attached via their hinge domain, and RAD21 which link them at their heads, and one STAG protein (STAG1 OR STAG2). In cohesin complexes, STAG1 is mutually exclusive with STAG2. In terms of processing, phosphorylated by PLK1. The large dissociation of cohesin from chromosome arms during prophase is partly due to its phosphorylation.

It localises to the nucleus. Its subcellular location is the chromosome. The protein resides in the centromere. Functionally, component of cohesin complex, a complex required for the cohesion of sister chromatids after DNA replication. The cohesin complex apparently forms a large proteinaceous ring within which sister chromatids can be trapped. At anaphase, the complex is cleaved and dissociates from chromatin, allowing sister chromatids to segregate. The cohesin complex may also play a role in spindle pole assembly during mitosis. This chain is Cohesin subunit SA-1 (stag1), found in Xenopus laevis (African clawed frog).